Reading from the N-terminus, the 335-residue chain is Ketol-acid reductoisomerase (NADP(+)) (335 aa).

The KARI N-terminal Rossmann domain maps to 5–185 (SKIYTDNDAN…GATRAGVIPT (181 aa)). NADP(+) is bound by residues 28-31 (YGSQ), serine 56, and 86-89 (DMVQ). Residue histidine 111 is part of the active site. Glycine 137 contacts NADP(+). The KARI C-terminal knotted domain occupies 186–331 (TFKEETETDL…NQLRDLVQKG (146 aa)). The Mg(2+) site is built by aspartate 194, glutamate 198, glutamate 230, and glutamate 234. Serine 255 serves as a coordination point for substrate.

Belongs to the ketol-acid reductoisomerase family. Mg(2+) serves as cofactor.

The enzyme catalyses (2R)-2,3-dihydroxy-3-methylbutanoate + NADP(+) = (2S)-2-acetolactate + NADPH + H(+). It carries out the reaction (2R,3R)-2,3-dihydroxy-3-methylpentanoate + NADP(+) = (S)-2-ethyl-2-hydroxy-3-oxobutanoate + NADPH + H(+). Its pathway is amino-acid biosynthesis; L-isoleucine biosynthesis; L-isoleucine from 2-oxobutanoate: step 2/4. It functions in the pathway amino-acid biosynthesis; L-valine biosynthesis; L-valine from pyruvate: step 2/4. In terms of biological role, involved in the biosynthesis of branched-chain amino acids (BCAA). Catalyzes an alkyl-migration followed by a ketol-acid reduction of (S)-2-acetolactate (S2AL) to yield (R)-2,3-dihydroxy-isovalerate. In the isomerase reaction, S2AL is rearranged via a Mg-dependent methyl migration to produce 3-hydroxy-3-methyl-2-ketobutyrate (HMKB). In the reductase reaction, this 2-ketoacid undergoes a metal-dependent reduction by NADPH to yield (R)-2,3-dihydroxy-isovalerate. The chain is Ketol-acid reductoisomerase (NADP(+)) from Saccharolobus solfataricus (strain ATCC 35092 / DSM 1617 / JCM 11322 / P2) (Sulfolobus solfataricus).